We begin with the raw amino-acid sequence, 338 residues long: POU domain, class 4, transcription factor 3 (338 aa).

The short motif at 56 to 65 (RAEALAAVDI) is the POU-IV box element. The 78-residue stretch at 179 to 256 (DVESDPRELE…VLQAWLEEAE (78 aa)) folds into the POU-specific domain. Residues 274 to 333 (RKRKRTSIAAPEKRSLEAYFAIQPRPSSEKIAAIAEKLDLKKNVVRVWFCNQRQKQKRMK) constitute a DNA-binding region (homeobox).

It belongs to the POU transcription factor family. Class-4 subfamily. In terms of assembly, interacts with ISL1. As to expression, brain.

It is found in the nucleus. The protein resides in the cytoplasm. Functionally, acts as a transcriptional activator. Acts by binding to sequences related to the consensus octamer motif 5'-ATGCAAAT-3' in the regulatory regions of its target genes. Involved in the auditory system development, required for terminal differentiation of hair cells in the inner ear. The chain is POU domain, class 4, transcription factor 3 from Mus musculus (Mouse).